The following is a 453-amino-acid chain: G-protein coupled receptor 39 (453 aa).

The Extracellular portion of the chain corresponds to 1-34; that stretch reads MASPSLPGSDCSQIIDHSHVPEFEVATWIKITLI. 2 cysteine pairs are disulfide-bonded: cysteine 11–cysteine 191 and cysteine 108–cysteine 210. Zn(2+) contacts are provided by histidine 17 and histidine 19. A helical membrane pass occupies residues 35-55; it reads LVYLIIFVMGLLGNSATIRVT. At 56-69 the chain is on the cytoplasmic side; it reads QVLQKKGYLQKEVT. Residues 70–89 form a helical membrane-spanning segment; that stretch reads DHMVSLACSDILVFLIGMPM. Residues 90-109 are Extracellular-facing; that stretch reads EFYSIIWNPLTTSSYTLSCK. The helical transmembrane segment at 110–131 threads the bilayer; it reads LHTFLFEACSYATLLHVLTLSF. Residues 132 to 151 are Cytoplasmic-facing; the sequence is ERYIAICHPFRYKAVSGPCQ. Residues 152 to 172 form a helical membrane-spanning segment; it reads VKLLIGFVWVTSALVALPLLF. Residues 173-217 lie on the Extracellular side of the membrane; sequence AMGTEYPLVNVPSHRGLTCNRSSTRHHEQPETSNMSICTNLSSRW. N-linked (GlcNAc...) asparagine glycosylation is found at asparagine 192, asparagine 206, and asparagine 212. The helical transmembrane segment at 218-242 threads the bilayer; the sequence is TVFQSSIFGAFVVYLVVLLSVAFMC. Topologically, residues 243–283 are cytoplasmic; that stretch reads WNMMQVLMKSQKGSLAGGTRPPQLRKSESEESRTARRQTII. A disordered region spans residues 255–274; that stretch reads GSLAGGTRPPQLRKSESEES. A helical transmembrane segment spans residues 284–305; that stretch reads FLRLIVVTLAVCWMPNQIRRIM. Residues 306–323 are Extracellular-facing; that stretch reads AAAKPKHDWTRSYFRAYM. Residues 324-344 form a helical membrane-spanning segment; it reads ILLPFSETFFYLSSVINPLLY. Topologically, residues 345-453 are cytoplasmic; it reads TVSSQQFRRV…AENGFQEHEV (109 aa). Serine 396 bears the Phosphoserine mark. Positions 415 to 453 are disordered; it reads SEAEPQSKSQSLSLESLEPNSGAKPANSAAENGFQEHEV. Low complexity predominate over residues 418–435; that stretch reads EPQSKSQSLSLESLEPNS.

Belongs to the G-protein coupled receptor 1 family. In terms of assembly, interacts with HTR1A. Interacts with GALR1. In terms of tissue distribution, expressed in many tissues, including the stomach, intestine and hypothalamus.

It localises to the cell membrane. In terms of biological role, zinc-sensing receptor that can sense changes in extracellular Zn(2+), mediate Zn(2+) signal transmission, and participates in the regulation of numerous physiological processes including glucose homeostasis regulation, gastrointestinal mobility, hormone secretion and cell death. Activation by Zn(2+) in keratinocytes increases the intracellular concentration of Ca(2+) and activates the ERK/MAPK and PI3K/AKT signaling pathways leading to epithelial repair. Plays an essential role in normal wound healing by inducing the production of cytokines including the major inflammatory cytokine IL6 via the PKC/MAPK/CEBPB pathway. Regulates adipose tissue metabolism, especially lipolysis, and regulates the function of lipases, such as hormone-sensitive lipase and adipose triglyceride lipase. Plays a role in the inhibition of cell death and protects against oxidative, endoplasmic reticulum and mitochondrial stress by inducing secretion of the cytoprotective pigment epithelium-derived growth factor (PEDF) and probably other protective transcripts in a GNA13/RHOA/SRE-dependent manner. Forms dynamic heteroreceptor complexes with HTR1A and GALR1 depending on cell type or specific physiological states, resulting in signaling diversity: HTR1A-GPR39 shows additive increase in signaling along the serum response element (SRE) and NF-kappa-B pathways while GALR1 acts as an antagonist blocking SRE. This Homo sapiens (Human) protein is G-protein coupled receptor 39 (GPR39).